The following is an 89-amino-acid chain: Small ribosomal subunit protein uS15 (89 aa).

The span at 1–21 (MVMTAEDKAQVIGEHKKHDGD) shows a compositional bias: basic and acidic residues. The segment at 1–24 (MVMTAEDKAQVIGEHKKHDGDTGS) is disordered.

This sequence belongs to the universal ribosomal protein uS15 family. As to quaternary structure, part of the 30S ribosomal subunit. Forms a bridge to the 50S subunit in the 70S ribosome, contacting the 23S rRNA.

In terms of biological role, one of the primary rRNA binding proteins, it binds directly to 16S rRNA where it helps nucleate assembly of the platform of the 30S subunit by binding and bridging several RNA helices of the 16S rRNA. Forms an intersubunit bridge (bridge B4) with the 23S rRNA of the 50S subunit in the ribosome. The chain is Small ribosomal subunit protein uS15 from Solidesulfovibrio magneticus (strain ATCC 700980 / DSM 13731 / RS-1) (Desulfovibrio magneticus).